The following is a 542-amino-acid chain: Carbamoyl phosphate synthase large chain, C-terminal section (542 aa).

Positions 1 to 389 are carbamoyl phosphate synthetic domain; it reads MSDKVLVIGA…WKAQLAAGHE (389 aa). The ATP-grasp domain occupies 122–316; sequence SKLLKKLGIP…LAKIGTKAIL (195 aa). 10 residues coordinate ATP: arginine 158, arginine 197, isoleucine 199, glutamate 204, glycine 230, valine 231, histidine 232, serine 233, glutamine 273, and glutamate 287. Residues glutamine 273, glutamate 287, and asparagine 289 each contribute to the Mg(2+) site. Mn(2+)-binding residues include glutamine 273, glutamate 287, and asparagine 289. The region spanning 388–542 is the MGS-like domain; the sequence is HELPLEGTAV…KPEELTRYGG (155 aa). The interval 390–542 is allosteric domain; the sequence is LPLEGTAVIS…KPEELTRYGG (153 aa).

Belongs to the CarB family. As to quaternary structure, composed of two chains; the small (or glutamine) chain promotes the hydrolysis of glutamine to ammonia, which is used by the large (or ammonia) chain to synthesize carbamoyl phosphate. Tetramer of heterodimers (alpha,beta)4. It depends on Mg(2+) as a cofactor. Mn(2+) is required as a cofactor.

The enzyme catalyses hydrogencarbonate + L-glutamine + 2 ATP + H2O = carbamoyl phosphate + L-glutamate + 2 ADP + phosphate + 2 H(+). The catalysed reaction is hydrogencarbonate + NH4(+) + 2 ATP = carbamoyl phosphate + 2 ADP + phosphate + 2 H(+). Its pathway is amino-acid biosynthesis; L-arginine biosynthesis; carbamoyl phosphate from bicarbonate: step 1/1. It functions in the pathway pyrimidine metabolism; UMP biosynthesis via de novo pathway; (S)-dihydroorotate from bicarbonate: step 1/3. In terms of biological role, large subunit of the glutamine-dependent carbamoyl phosphate synthetase (CPSase). CPSase catalyzes the formation of carbamoyl phosphate from the ammonia moiety of glutamine, carbonate, and phosphate donated by ATP, constituting the first step of 2 biosynthetic pathways, one leading to arginine and/or urea and the other to pyrimidine nucleotides. The large subunit (synthetase) binds the substrates ammonia (free or transferred from glutamine from the small subunit), hydrogencarbonate and ATP and carries out an ATP-coupled ligase reaction, activating hydrogencarbonate by forming carboxy phosphate which reacts with ammonia to form carbamoyl phosphate. In Methanopyrus kandleri (strain AV19 / DSM 6324 / JCM 9639 / NBRC 100938), this protein is Carbamoyl phosphate synthase large chain, C-terminal section (carB2).